A 120-amino-acid chain; its full sequence is NAD(P)H-quinone oxidoreductase subunit 3, chloroplastic (120 aa).

The next 3 helical transmembrane spans lie at 9 to 29 (IFWAFLIISSVIPIFAFIISG), 60 to 80 (ICYYMFALVFVVFDVETVFLY), and 88 to 108 (ILGVSVFIEALIFVLILIVGS).

It belongs to the complex I subunit 3 family. NDH is composed of at least 16 different subunits, 5 of which are encoded in the nucleus.

It is found in the plastid. The protein localises to the chloroplast thylakoid membrane. It carries out the reaction a plastoquinone + NADH + (n+1) H(+)(in) = a plastoquinol + NAD(+) + n H(+)(out). The catalysed reaction is a plastoquinone + NADPH + (n+1) H(+)(in) = a plastoquinol + NADP(+) + n H(+)(out). Its function is as follows. NDH shuttles electrons from NAD(P)H:plastoquinone, via FMN and iron-sulfur (Fe-S) centers, to quinones in the photosynthetic chain and possibly in a chloroplast respiratory chain. The immediate electron acceptor for the enzyme in this species is believed to be plastoquinone. Couples the redox reaction to proton translocation, and thus conserves the redox energy in a proton gradient. The chain is NAD(P)H-quinone oxidoreductase subunit 3, chloroplastic from Morus indica (Mulberry).